A 408-amino-acid polypeptide reads, in one-letter code: 26S proteasome regulatory subunit 6B homolog (408 aa).

At Ala2 the chain carries N-acetylalanine. Ser16 bears the Phosphoserine mark. The stretch at 28–75 (EDLYGRLKSLERQLEFTDIQEEYVKDEQKNLKRELLRAQEEVKRIQSV) forms a coiled coil. 196 to 203 (GPPGTGKT) lines the ATP pocket.

Belongs to the AAA ATPase family. In terms of assembly, component of the 19S regulatory particle (RP/PA700) base subcomplex of the 26S proteasome. The 26S proteasome is composed of a core protease (CP), known as the 20S proteasome, capped at one or both ends by the 19S regulatory particle (RP/PA700). The RP/PA700 complex is composed of at least 17 different subunits in two subcomplexes, the base and the lid, which form the portions proximal and distal to the 20S proteolytic core, respectively. Expressed in dark-grown etiolated seedlings, roots, leaves, stems and flowers.

It is found in the cytoplasm. Its subcellular location is the nucleus. The 26S proteasome is involved in the ATP-dependent degradation of ubiquitinated proteins. The regulatory (or ATPase) complex confers ATP dependency and substrate specificity to the 26S complex. The sequence is that of 26S proteasome regulatory subunit 6B homolog (RPT3) from Arabidopsis thaliana (Mouse-ear cress).